Reading from the N-terminus, the 356-residue chain is 11-beta-hydroxysteroid dehydrogenase (356 aa).

A helical; Signal-anchor for type II membrane protein membrane pass occupies residues 10–30 (LVVPPAGLLMLAFAWPSLAFF). Residues 13–26 (PPAGLLMLAFAWPS) carry the Proline-knob motif. Position 54-85 (54-85 (GASSGIGEQIAYQYAKRRANLVLVARREHRLR)) interacts with NADP(+). S184 provides a ligand contact to substrate. Y197 acts as the Proton acceptor in catalysis. NADP(+)-binding positions include 197-201 (YNAAK) and K201.

It belongs to the short-chain dehydrogenases/reductases (SDR) family. As to expression, expressed in megagametophytes (at protein level).

The protein localises to the lipid droplet. The protein resides in the membrane. It carries out the reaction an 11beta-hydroxysteroid + NADP(+) = an 11-oxosteroid + NADPH + H(+). The enzyme catalyses corticosterone + NADP(+) = 11-dehydrocorticosterone + NADPH + H(+). The catalysed reaction is 17beta-estradiol + NADP(+) = estrone + NADPH + H(+). In terms of biological role, has dehydrogenase activity against corticosterone (11 beta-hydroxysteroid) and estradiol (17 beta-hydroxysteroid) in the presence of NADP(+). May be involved in signal transduction regulated by various sterols. In Pinus massoniana (Chinese red pine), this protein is 11-beta-hydroxysteroid dehydrogenase.